The primary structure comprises 262 residues: Nurim (262 aa).

Residues 1–4 (MAPA) lie on the Nuclear side of the membrane. The helical transmembrane segment at 5 to 28 (LLLIPAALASFILAFGTGVEFVRF) threads the bilayer. Topologically, residues 29-58 (TSLRPLLGGIPESGGPDARQGWLAALQDRS) are perinuclear space. The helical transmembrane segment at 59–80 (ILAPLAWDLGLLLLFVGQHSLM) threads the bilayer. The Nuclear segment spans residues 81-97 (AAERVKAWTSRYFGVLQ). A helical membrane pass occupies residues 98-114 (RSLYVACTALALQLVMR). Residues 115–133 (YWEPIPKGPVLWEARAEPW) lie on the Perinuclear space side of the membrane. A helical transmembrane segment spans residues 134 to 164 (ATWVPLLCFVLHVISWLLIFSILLVFDYAEL). Over 165-191 (MGLKQVYYHVLGLGEPLALKSPRALRL) the chain is Nuclear. Residues 192–210 (FSHLRHPVCVELLTVLWVV) traverse the membrane as a helical segment. Residues 211-216 (PTLGTD) lie on the Perinuclear space side of the membrane. The helical transmembrane segment at 217–234 (RLLLAFLLTLYLGLAHGL) threads the bilayer. At 235 to 262 (DQQDLRYLRAQLQRKLHLLSRPQDGEAE) the chain is on the nuclear side.

Belongs to the nurim family.

It is found in the nucleus inner membrane. The sequence is that of Nurim (NRM) from Homo sapiens (Human).